Consider the following 172-residue polypeptide: Shikimate kinase (172 aa).

11–16 (GAGKST) contacts ATP. S15 serves as a coordination point for Mg(2+). Substrate-binding residues include D33, R57, and G79. Residue R117 coordinates ATP. R136 is a substrate binding site. R153 provides a ligand contact to ATP.

Belongs to the shikimate kinase family. In terms of assembly, monomer. It depends on Mg(2+) as a cofactor.

The protein localises to the cytoplasm. The catalysed reaction is shikimate + ATP = 3-phosphoshikimate + ADP + H(+). It participates in metabolic intermediate biosynthesis; chorismate biosynthesis; chorismate from D-erythrose 4-phosphate and phosphoenolpyruvate: step 5/7. Catalyzes the specific phosphorylation of the 3-hydroxyl group of shikimic acid using ATP as a cosubstrate. The protein is Shikimate kinase of Pseudomonas fluorescens (strain Pf0-1).